Reading from the N-terminus, the 146-residue chain is Large ribosomal subunit protein uL15 (146 aa).

Positions 1-13 are enriched in basic and acidic residues; sequence MKLHELKPAEGSR. A disordered region spans residues 1–52; sequence MKLHELKPAEGSRKVRNRVGRGIGSGNGKTAGKGHKGQNARSGGGVRLGFEG. 2 stretches are compositionally biased toward gly residues: residues 21-31 and 42-52; these read RGIGSGNGKTA and SGGGVRLGFEG.

The protein belongs to the universal ribosomal protein uL15 family. As to quaternary structure, part of the 50S ribosomal subunit.

In terms of biological role, binds to the 23S rRNA. The polypeptide is Large ribosomal subunit protein uL15 (Bacillus cereus (strain B4264)).